The sequence spans 173 residues: Alpha-crystallin A chain (173 aa).

N-acetylmethionine is present on methionine 1. The segment at 1 to 63 (MDIAIQHPWF…RTVLDSGISE (63 aa)) is required for complex formation with BFSP1 and BFSP2. Position 6 is a deamidated glutamine; partial (glutamine 6). At serine 45 the chain carries Phosphoserine. Glutamine 50 carries the post-translational modification Deamidated glutamine; partial. A sHSP domain is found at 52 to 162 (LFRTVLDSGI…GHSERAIPVS (111 aa)). Lysine 70 is subject to N6-acetyllysine. Glutamine 90 is modified (deamidated glutamine; partial). Lysine 99 carries the N6-acetyllysine modification. Histidine 100 contributes to the Zn(2+) binding site. Asparagine 101 bears the Deamidated asparagine; partial mark. Zn(2+) contacts are provided by glutamate 102 and histidine 107. Serine 122 bears the Phosphoserine mark. Asparagine 123 is modified (deamidated asparagine; partial). Residues 144-173 (PKVPSGVDAGHSERAIPVSREEKPSSAPSS) form a disordered region. Over residues 153 to 167 (GHSERAIPVSREEKP) the composition is skewed to basic and acidic residues. Position 154 (histidine 154) interacts with Zn(2+). Residue serine 162 is glycosylated (O-linked (GlcNAc) serine).

The protein belongs to the small heat shock protein (HSP20) family. Heteromer composed of three CRYAA and one CRYAB subunits. Inter-subunit bridging via zinc ions enhances stability, which is crucial as there is no protein turn over in the lens. Can also form homodimers and homotetramers (dimers of dimers) which serve as the building blocks of homooligomers. Within homooligomers, the zinc-binding motif is created from residues of 3 different molecules. His-100 and Glu-102 from one molecule are ligands of the zinc ion, and His-107 and His-154 residues from additional molecules complete the site with tetrahedral coordination geometry. Part of a complex required for lens intermediate filament formation composed of BFSP1, BFSP2 and CRYAA. Acetylation at Lys-70 may increase chaperone activity. Post-translationally, undergoes age-dependent proteolytical cleavage at the C-terminus.

It is found in the cytoplasm. The protein localises to the nucleus. In terms of biological role, contributes to the transparency and refractive index of the lens. Acts as a chaperone, preventing aggregation of various proteins under a wide range of stress conditions. Required for the correct formation of lens intermediate filaments as part of a complex composed of BFSP1, BFSP2 and CRYAA. The sequence is that of Alpha-crystallin A chain (CRYAA) from Pteropus poliocephalus (Grey-headed flying fox).